Here is a 69-residue protein sequence, read N- to C-terminus: Conotoxin Eb6.1 (69 aa).

The signal sequence occupies residues 1 to 17 (VLIIAVLFLTACQLTTA). The propeptide occupies 18-41 (ETYSRGRQKHRARRSTDKNSKWTR). Cystine bridges form between Cys43–Cys57, Cys50–Cys61, and Cys56–Cys68.

This sequence belongs to the conotoxin O1 superfamily. In terms of tissue distribution, expressed by the venom duct.

It is found in the secreted. The sequence is that of Conotoxin Eb6.1 (E1) from Conus ebraeus (Hebrew cone).